Here is an 86-residue protein sequence, read N- to C-terminus: Serine protease inhibitor Kazal-type 9 (86 aa).

The N-terminal stretch at 1-19 (MRATAIVLLLALTLATMFS) is a signal peptide. Residues 26 to 86 (TKQMVDCSHY…TLKFVHFGKC (61 aa)) form the Kazal-like domain. 3 cysteine pairs are disulfide-bonded: Cys32-Cys68, Cys46-Cys65, and Cys54-Cys86.

As to quaternary structure, dimer. Interacts with KLK5 and KLK8. In terms of tissue distribution, skin. Highly expressed at sites of hyperkeratosis. Also detected in thymus, tonsils, testis, pancreas, liver, placenta and brain. Expressed at stratum granulosum and stratum corneum at palmar and plantar sites (at protein level).

It localises to the secreted. Its function is as follows. Serine protease inhibitor which specifically inhibits KLK5. May contribute to the regulation of the desquamation process in skin by inhibiting KLK5. The sequence is that of Serine protease inhibitor Kazal-type 9 (SPINK9) from Homo sapiens (Human).